The primary structure comprises 179 residues: Alpha-S2-casein-like A (179 aa).

A signal peptide spans 1–15; the sequence is MKFFIFTCLVAAALA. 2 positions are modified to phosphoserine: serine 24 and serine 25. Residues 44 to 121 are disordered; that stretch reads FQTPQDSASS…NAIYDVPSQE (78 aa). Residues 63–74 show a composition bias toward basic and acidic residues; sequence ISEKIEQSEEQK. The span at 93 to 110 shows a compositional bias: polar residues; the sequence is PQICTPYQQQSSVNQRPQ.

It belongs to the alpha-casein family. As to expression, mammary gland specific. Secreted in milk.

It is found in the secreted. In terms of biological role, important role in the capacity of milk to transport calcium phosphate. The polypeptide is Alpha-S2-casein-like A (Csn1s2a) (Rattus norvegicus (Rat)).